The sequence spans 124 residues: Ribonuclease pancreatic (124 aa).

The disordered stretch occupies residues 1–21; it reads AESSAMKFQRQHMDSDGHPDT. Positions 7 and 10 each coordinate substrate. Residue H12 is the Proton acceptor of the active site. 4 disulfide bridges follow: C26-C84, C40-C95, C58-C110, and C65-C72. Substrate is bound by residues 41-45, K66, and R85; that span reads KPVNT. H119 serves as the catalytic Proton donor.

Belongs to the pancreatic ribonuclease family. Monomer. Interacts with and forms tight 1:1 complexes with RNH1. Dimerization of two such complexes may occur. Interaction with RNH1 inhibits this protein. In terms of tissue distribution, pancreas.

The protein localises to the secreted. The catalysed reaction is an [RNA] containing cytidine + H2O = an [RNA]-3'-cytidine-3'-phosphate + a 5'-hydroxy-ribonucleotide-3'-[RNA].. It carries out the reaction an [RNA] containing uridine + H2O = an [RNA]-3'-uridine-3'-phosphate + a 5'-hydroxy-ribonucleotide-3'-[RNA].. Functionally, endonuclease that catalyzes the cleavage of RNA on the 3' side of pyrimidine nucleotides. Acts on single-stranded and double-stranded RNA. In Galea musteloides (Common yellow-toothed cavy), this protein is Ribonuclease pancreatic (RNASE1).